We begin with the raw amino-acid sequence, 438 residues long: Methionine aminopeptidase 2 (438 aa).

The segment at 1–89 (MAAQAAPAEE…LFPNKQYPKG (89 aa)) is disordered. Positions 10-20 (ELSKLSVEETK) are enriched in basic and acidic residues. Over residues 51–65 (AKKKKKRKPRKKKKA) the composition is skewed to basic residues. Residue His191 participates in substrate binding. The a divalent metal cation site is built by Asp211, Asp222, and His291. His299 is a binding site for substrate. A divalent metal cation is bound by residues Glu324 and Glu419.

Belongs to the peptidase M24A family. Methionine aminopeptidase eukaryotic type 2 subfamily. Requires Co(2+) as cofactor. Zn(2+) serves as cofactor. The cofactor is Mn(2+). It depends on Fe(2+) as a cofactor.

It is found in the cytoplasm. The enzyme catalyses Release of N-terminal amino acids, preferentially methionine, from peptides and arylamides.. Functionally, cotranslationally removes the N-terminal methionine from nascent proteins. The N-terminal methionine is often cleaved when the second residue in the primary sequence is small and uncharged (Met-Ala-, Cys, Gly, Pro, Ser, Thr, or Val). The protein is Methionine aminopeptidase 2 of Sordaria macrospora (strain ATCC MYA-333 / DSM 997 / K(L3346) / K-hell).